Reading from the N-terminus, the 122-residue chain is MARISGIDLPREKRVEIGLTYIYGIGLSTSQKILAVTGINPDTRVKDLSEEEVNEIRTYINKNLMVEGDLRRDVALNIKRLVEIGSYRGIRHRRGLPVRGQKTKTNARTRKGPKKTIANKKK.

A disordered region spans residues 93–122 (RRGLPVRGQKTKTNARTRKGPKKTIANKKK).

This sequence belongs to the universal ribosomal protein uS13 family. In terms of assembly, part of the 30S ribosomal subunit. Forms a loose heterodimer with protein S19. Forms two bridges to the 50S subunit in the 70S ribosome.

Located at the top of the head of the 30S subunit, it contacts several helices of the 16S rRNA. In the 70S ribosome it contacts the 23S rRNA (bridge B1a) and protein L5 of the 50S subunit (bridge B1b), connecting the 2 subunits; these bridges are implicated in subunit movement. Contacts the tRNAs in the A and P-sites. This is Small ribosomal subunit protein uS13 from Clostridium beijerinckii (strain ATCC 51743 / NCIMB 8052) (Clostridium acetobutylicum).